Reading from the N-terminus, the 515-residue chain is Fatty acyl-CoA reductase 1 (515 aa).

Over 1–465 the chain is Cytoplasmic; the sequence is MVSIPEYYEG…ARKHLNKLRN (465 aa). A helical membrane pass occupies residues 466–483; sequence IRYGFNTILVILIWRIFI. Residues 484 to 515 are Peroxisomal-facing; it reads ARSQMARNIWYFVVSLCYKFLSYFRASSTMRY.

The protein belongs to the fatty acyl-CoA reductase family.

It localises to the peroxisome membrane. The enzyme catalyses a long-chain fatty acyl-CoA + 2 NADPH + 2 H(+) = a long-chain primary fatty alcohol + 2 NADP(+) + CoA. The catalysed reaction is hexadecanoyl-CoA + 2 NADPH + 2 H(+) = hexadecan-1-ol + 2 NADP(+) + CoA. It catalyses the reaction octadecanoyl-CoA + 2 NADPH + 2 H(+) = octadecan-1-ol + 2 NADP(+) + CoA. It carries out the reaction (9Z)-octadecenoyl-CoA + 2 NADPH + 2 H(+) = (9Z)-octadecen-1-ol + 2 NADP(+) + CoA. The enzyme catalyses (9Z,12Z)-octadecadienoyl-CoA + 2 NADPH + 2 H(+) = (9Z,12Z)-octadecadien-1-ol + 2 NADP(+) + CoA. The catalysed reaction is eicosanoyl-CoA + 2 NADPH + 2 H(+) = eicosan-1-ol + 2 NADP(+) + CoA. It catalyses the reaction 16-methylheptadecanoyl-CoA + 2 NADPH + 2 H(+) = 16-methylheptadecan-1-ol + 2 NADP(+) + CoA. It carries out the reaction 18-methylnonadecanoyl-CoA + 2 NADPH + 2 H(+) = 18-methylnonadecan-1-ol + 2 NADP(+) + CoA. In terms of biological role, catalyzes the reduction of saturated and unsaturated C16 or C18 fatty acyl-CoA to fatty alcohols. It plays an essential role in the production of ether lipids/plasmalogens which synthesis requires fatty alcohols. In parallel, it is also required for wax monoesters production since fatty alcohols also constitute a substrate for their synthesis. The chain is Fatty acyl-CoA reductase 1 from Gallus gallus (Chicken).